The primary structure comprises 606 residues: Chaperone protein DnaK (606 aa).

Phosphothreonine; by autocatalysis is present on threonine 174. Residues 576–606 (QAAGSANPGGSQGTSQGNVYEADYKVEDDNK) are disordered. Positions 597-606 (ADYKVEDDNK) are enriched in basic and acidic residues.

This sequence belongs to the heat shock protein 70 family.

Acts as a chaperone. This chain is Chaperone protein DnaK, found in Caldanaerobacter subterraneus subsp. tengcongensis (strain DSM 15242 / JCM 11007 / NBRC 100824 / MB4) (Thermoanaerobacter tengcongensis).